The sequence spans 469 residues: MSEDLSMKCGLEIHVQVDTNSKLFCQCPTNYKDVEPNTNICPVCIGHPGAKPMPPNKKAIDVAIMVAKMLDCEMVIDKDIYFQRKHYNYPDLPSGYQKTSVPIGEHGTFLGVGITEVHLEEDPGQYKPDLGTVDYNRSGTPLIEIVTDPDMKSPEEAREFLRQLMRLFRYIGHLRGEGTMRADTNISIKYNGIQGNRVEVKNVNSIRGVYKVLKYELIRQKNVLRRGGEIKMETRAFMESQMITKGMRSKETADDYRYIPDPDLQPIVLNNNWVEKVEAQMPETPMNKEKRFVEQYGIKEDDAKVLVSDLELADVFEKVVAELGNDKNGISLAVTWIRNELKRVLVYNKIEFFETNLKPEHMVELINSIKDKTISQKIGKTIIEQMVEHKGEKTPKELITEMGLTVIEDTSELEKACEEAIKNSEKAVEDYKSGNQRALNSVVGQVMKLTRGRAEPGTVVKILKKKIDG.

It belongs to the GatB/GatE family. GatB subfamily. In terms of assembly, heterotrimer of A, B and C subunits.

It catalyses the reaction L-glutamyl-tRNA(Gln) + L-glutamine + ATP + H2O = L-glutaminyl-tRNA(Gln) + L-glutamate + ADP + phosphate + H(+). The enzyme catalyses L-aspartyl-tRNA(Asn) + L-glutamine + ATP + H2O = L-asparaginyl-tRNA(Asn) + L-glutamate + ADP + phosphate + 2 H(+). In terms of biological role, allows the formation of correctly charged Asn-tRNA(Asn) or Gln-tRNA(Gln) through the transamidation of misacylated Asp-tRNA(Asn) or Glu-tRNA(Gln) in organisms which lack either or both of asparaginyl-tRNA or glutaminyl-tRNA synthetases. The reaction takes place in the presence of glutamine and ATP through an activated phospho-Asp-tRNA(Asn) or phospho-Glu-tRNA(Gln). This is Aspartyl/glutamyl-tRNA(Asn/Gln) amidotransferase subunit B from Methanococcus maripaludis (strain DSM 14266 / JCM 13030 / NBRC 101832 / S2 / LL).